The chain runs to 372 residues: Glutamate 5-kinase (372 aa).

Residue Lys14 coordinates ATP. Substrate-binding residues include Ser54, Asp141, and Asn153. Residue 173 to 174 coordinates ATP; it reads TD. The PUA domain occupies 280-358; the sequence is RGTLVLDAGA…DAIESILGYS (79 aa).

The protein belongs to the glutamate 5-kinase family.

The protein resides in the cytoplasm. It catalyses the reaction L-glutamate + ATP = L-glutamyl 5-phosphate + ADP. It participates in amino-acid biosynthesis; L-proline biosynthesis; L-glutamate 5-semialdehyde from L-glutamate: step 1/2. In terms of biological role, catalyzes the transfer of a phosphate group to glutamate to form L-glutamate 5-phosphate. This chain is Glutamate 5-kinase, found in Pseudomonas putida (strain GB-1).